The primary structure comprises 194 residues: dITP/XTP pyrophosphatase (194 aa).

Residue 7–12 (SGNVNK) coordinates substrate. Mg(2+)-binding residues include Glu-38 and Asp-67. Asp-67 serves as the catalytic Proton acceptor. Substrate contacts are provided by residues Ser-68, 151–154 (FGYD), Lys-174, and 179–180 (HR).

Belongs to the HAM1 NTPase family. As to quaternary structure, homodimer. It depends on Mg(2+) as a cofactor.

The catalysed reaction is XTP + H2O = XMP + diphosphate + H(+). The enzyme catalyses dITP + H2O = dIMP + diphosphate + H(+). It catalyses the reaction ITP + H2O = IMP + diphosphate + H(+). Functionally, pyrophosphatase that catalyzes the hydrolysis of nucleoside triphosphates to their monophosphate derivatives, with a high preference for the non-canonical purine nucleotides XTP (xanthosine triphosphate), dITP (deoxyinosine triphosphate) and ITP. Seems to function as a house-cleaning enzyme that removes non-canonical purine nucleotides from the nucleotide pool, thus preventing their incorporation into DNA/RNA and avoiding chromosomal lesions. The protein is dITP/XTP pyrophosphatase of Treponema denticola (strain ATCC 35405 / DSM 14222 / CIP 103919 / JCM 8153 / KCTC 15104).